The primary structure comprises 301 residues: tRNA pseudouridine synthase B (301 aa).

Residue aspartate 38 is the Nucleophile of the active site.

This sequence belongs to the pseudouridine synthase TruB family. Type 1 subfamily.

The catalysed reaction is uridine(55) in tRNA = pseudouridine(55) in tRNA. Functionally, responsible for synthesis of pseudouridine from uracil-55 in the psi GC loop of transfer RNAs. The polypeptide is tRNA pseudouridine synthase B (Ehrlichia canis (strain Jake)).